We begin with the raw amino-acid sequence, 118 residues long: UPF0102 protein RHA1_ro06551 (118 aa).

It belongs to the UPF0102 family.

This Rhodococcus jostii (strain RHA1) protein is UPF0102 protein RHA1_ro06551.